The sequence spans 359 residues: Glycerol-3-phosphate dehydrogenase [NAD(P)+] (359 aa).

The NADPH site is built by Thr-11, Trp-12, Arg-32, and Lys-107. Sn-glycerol 3-phosphate is bound by residues Lys-107 and Gly-138. Ala-142 is an NADPH binding site. Lys-193, Asp-246, Ser-256, Arg-257, and Asn-258 together coordinate sn-glycerol 3-phosphate. Lys-193 functions as the Proton acceptor in the catalytic mechanism. Position 257 (Arg-257) interacts with NADPH. Residues Val-281 and Glu-283 each contribute to the NADPH site.

This sequence belongs to the NAD-dependent glycerol-3-phosphate dehydrogenase family.

The protein localises to the cytoplasm. The catalysed reaction is sn-glycerol 3-phosphate + NAD(+) = dihydroxyacetone phosphate + NADH + H(+). It carries out the reaction sn-glycerol 3-phosphate + NADP(+) = dihydroxyacetone phosphate + NADPH + H(+). Its pathway is membrane lipid metabolism; glycerophospholipid metabolism. Catalyzes the reduction of the glycolytic intermediate dihydroxyacetone phosphate (DHAP) to sn-glycerol 3-phosphate (G3P), the key precursor for phospholipid synthesis. In Dehalococcoides mccartyi (strain CBDB1), this protein is Glycerol-3-phosphate dehydrogenase [NAD(P)+].